Consider the following 287-residue polypeptide: Elongation factor Ts (287 aa).

Residues 80–83 are involved in Mg(2+) ion dislocation from EF-Tu; it reads TDFL.

This sequence belongs to the EF-Ts family.

The protein resides in the cytoplasm. In terms of biological role, associates with the EF-Tu.GDP complex and induces the exchange of GDP to GTP. It remains bound to the aminoacyl-tRNA.EF-Tu.GTP complex up to the GTP hydrolysis stage on the ribosome. This chain is Elongation factor Ts, found in Stutzerimonas stutzeri (strain A1501) (Pseudomonas stutzeri).